We begin with the raw amino-acid sequence, 199 residues long: GTP cyclohydrolase-2 (199 aa).

52–56 provides a ligand contact to GTP; sequence RMHSE. Cys57, Cys68, and Cys70 together coordinate Zn(2+). GTP-binding positions include Gln73, 94 to 96, and Thr116; that span reads EGR. Residue Asp128 is the Proton acceptor of the active site. Arg130 serves as the catalytic Nucleophile. Thr151 and Lys156 together coordinate GTP.

This sequence belongs to the GTP cyclohydrolase II family. Zn(2+) is required as a cofactor.

It catalyses the reaction GTP + 4 H2O = 2,5-diamino-6-hydroxy-4-(5-phosphoribosylamino)-pyrimidine + formate + 2 phosphate + 3 H(+). The protein operates within cofactor biosynthesis; riboflavin biosynthesis; 5-amino-6-(D-ribitylamino)uracil from GTP: step 1/4. Catalyzes the conversion of GTP to 2,5-diamino-6-ribosylamino-4(3H)-pyrimidinone 5'-phosphate (DARP), formate and pyrophosphate. The chain is GTP cyclohydrolase-2 from Aliivibrio fischeri (strain MJ11) (Vibrio fischeri).